The sequence spans 88 residues: MENNVQPYDVAGYAIASALVRLLVKKAIITAEEGKAIFSSSAEILKDAPAMRTSRREKLQLSKIMEDIISSLDPDADGSQKPQTHERQ.

The protein localises to the host cytoplasm. This is an uncharacterized protein from Escherichia phage Mu (Bacteriophage Mu).